The sequence spans 563 residues: Dihydroxy-acid dehydratase (563 aa).

Asp78 serves as a coordination point for Mg(2+). Cys119 serves as a coordination point for [2Fe-2S] cluster. Residues Asp120 and Lys121 each coordinate Mg(2+). N6-carboxylysine is present on Lys121. Cys191 contacts [2Fe-2S] cluster. Residue Glu442 coordinates Mg(2+). The Proton acceptor role is filled by Ser468.

It belongs to the IlvD/Edd family. Homodimer. [2Fe-2S] cluster serves as cofactor. Requires Mg(2+) as cofactor.

It catalyses the reaction (2R)-2,3-dihydroxy-3-methylbutanoate = 3-methyl-2-oxobutanoate + H2O. The catalysed reaction is (2R,3R)-2,3-dihydroxy-3-methylpentanoate = (S)-3-methyl-2-oxopentanoate + H2O. It participates in amino-acid biosynthesis; L-isoleucine biosynthesis; L-isoleucine from 2-oxobutanoate: step 3/4. The protein operates within amino-acid biosynthesis; L-valine biosynthesis; L-valine from pyruvate: step 3/4. In terms of biological role, functions in the biosynthesis of branched-chain amino acids. Catalyzes the dehydration of (2R,3R)-2,3-dihydroxy-3-methylpentanoate (2,3-dihydroxy-3-methylvalerate) into 2-oxo-3-methylpentanoate (2-oxo-3-methylvalerate) and of (2R)-2,3-dihydroxy-3-methylbutanoate (2,3-dihydroxyisovalerate) into 2-oxo-3-methylbutanoate (2-oxoisovalerate), the penultimate precursor to L-isoleucine and L-valine, respectively. The chain is Dihydroxy-acid dehydratase from Desulfitobacterium hafniense (strain DSM 10664 / DCB-2).